A 581-amino-acid polypeptide reads, in one-letter code: uncharacterized protein (581 aa).

Belongs to the UbiD family.

This is an uncharacterized protein from Chlamydia caviae (strain ATCC VR-813 / DSM 19441 / 03DC25 / GPIC) (Chlamydophila caviae).